The following is a 745-amino-acid chain: Junction plakoglobin (745 aa).

Met-1 carries the post-translational modification N-acetylmethionine. An O-linked (GlcNAc) threonine glycan is attached at Thr-14. A phosphoserine mark is found at Ser-99 and Ser-125. ARM repeat units follow at residues 132-171 (NYQD…QLSK), 172-215 (KEAS…LSHH), 216-255 (REGL…NLLL), 258-297 (EGAK…LLAY), 298-341 (GNQE…LSVC), 342-381 (PSNK…NLSD), 383-420 (ATKQ…NLTC), 423-464 (SKNK…HLTS), 470-510 (EMAQ…NLAL), 512-551 (PANH…QPYT), 574-613 (PMNR…ELAQ), and 615-661 (KEAA…PDYR). The interval 132 to 297 (NYQDDAELAT…TTDCLQLLAY (166 aa)) is interaction with DSC1 and DSG1. Position 182 is a phosphoserine (Ser-182). The segment at 574-661 (PMNRMEIFRL…ISEDKNPDYR (88 aa)) is interaction with DSC1. Residues Ser-665 and Ser-730 each carry the phosphoserine modification.

This sequence belongs to the beta-catenin family. Homodimer. Component of an E-cadherin/catenin adhesion complex composed of at least E-cadherin/CDH1 and gamma-catenin/JUP, and possibly alpha-catenin/CTNNA1; the complex is located to adherens junctions. The stable association of CTNNA1 is controversial as CTNNA1 was shown not to bind to F-actin when assembled in the complex. Interacts with MUC1. Interacts with CAV1. Interacts with PTPRJ. Interacts with DSG1. Interacts with DSC1 and DSC2. Interacts with PKP2. Interacts with PKP3 (via N-terminus); the interaction is required for PKP3 localization to desmosome cell-cell junctions. Interacts with DSG4. Post-translationally, may be phosphorylated by FER.

The protein resides in the cell junction. Its subcellular location is the adherens junction. It localises to the desmosome. It is found in the cytoplasm. The protein localises to the cytoskeleton. The protein resides in the cell membrane. Its subcellular location is the nucleus. Common junctional plaque protein. The membrane-associated plaques are architectural elements in an important strategic position to influence the arrangement and function of both the cytoskeleton and the cells within the tissue. The presence of plakoglobin in both the desmosomes and in the intermediate junctions suggests that it plays a central role in the structure and function of submembranous plaques. Acts as a substrate for VE-PTP and is required by it to stimulate VE-cadherin function in endothelial cells. Can replace beta-catenin in E-cadherin/catenin adhesion complexes which are proposed to couple cadherins to the actin cytoskeleton. The chain is Junction plakoglobin from Bos taurus (Bovine).